Here is a 506-residue protein sequence, read N- to C-terminus: uncharacterized protein (506 aa).

Belongs to the Mg-chelatase subunits D/I family. ComM subfamily.

This is an uncharacterized protein from Escherichia coli (strain K12).